A 130-amino-acid polypeptide reads, in one-letter code: Small ribosomal subunit protein uS8 (130 aa).

It belongs to the universal ribosomal protein uS8 family. In terms of assembly, part of the 30S ribosomal subunit. Contacts proteins S5 and S12.

Its function is as follows. One of the primary rRNA binding proteins, it binds directly to 16S rRNA central domain where it helps coordinate assembly of the platform of the 30S subunit. This is Small ribosomal subunit protein uS8 from Nitrosococcus oceani (strain ATCC 19707 / BCRC 17464 / JCM 30415 / NCIMB 11848 / C-107).